A 305-amino-acid chain; its full sequence is MSVSVAAEHDYIGLSEFPTMEATTMSDKTKTRDNNNGLNFKATELRLGLPGSESPERVDSRFLALNKSSCPVSGAKRVFSDAINDSNKWVFSPGSTTATGDVGSGSGPRTSVVKDGKSTTFTKPAVPVKEKKSSATAPASKAQVVGWPPIRSFRKNSMASSQSQKPGNNSETEEAEAKSGPEQPCLYVKVSMEGAPYLRKIDLKTYKSYLELSSALEKMFSCFTIGQFGSHGGCGRDGLNESRLTDLLRGSEYVVTYEDKDSDWMLVGDVPWEMFICSCKKLRIMKSSEAIGLAPRVMEKCRSRN.

An EAR-like (transcriptional repression) motif is present at residues 45-49; sequence LRLGL. Disordered regions lie at residues 96–119 and 155–180; these read TTATGDVGSGSGPRTSVVKDGKST and KNSMASSQSQKPGNNSETEEAEAKSG. Positions 155 to 170 are enriched in polar residues; it reads KNSMASSQSQKPGNNS. Residues 185-287 enclose the PB1 domain; it reads CLYVKVSMEG…SCKKLRIMKS (103 aa).

It belongs to the Aux/IAA family. In terms of assembly, homodimers and heterodimers. Interacts with phytochrome A. Interacts with TPL.

Its subcellular location is the nucleus. In terms of biological role, aux/IAA proteins are short-lived transcriptional factors that function as repressors of early auxin response genes at low auxin concentrations. Repression is thought to result from the interaction with auxin response factors (ARFs), proteins that bind to the auxin-responsive promoter element (AuxRE). Formation of heterodimers with ARF proteins may alter their ability to modulate early auxin response genes expression. In Arabidopsis thaliana (Mouse-ear cress), this protein is Auxin-responsive protein IAA27 (IAA27).